A 66-amino-acid polypeptide reads, in one-letter code: Large ribosomal subunit protein bL35 (66 aa).

Belongs to the bacterial ribosomal protein bL35 family.

This Thermomicrobium roseum (strain ATCC 27502 / DSM 5159 / P-2) protein is Large ribosomal subunit protein bL35.